Here is a 747-residue protein sequence, read N- to C-terminus: Tripartite terminase subunit 3 (747 aa).

Positions 194-198 (KRAKV) match the Nuclear localization signal motif. Positions 267–274 (VPRRHGKT) match the Walker A motif motif. The Walker B motif motif lies at 361–366 (LLFVDE). Residue Glu366 is the For ATPase activity of the active site. Active-site for nuclease activity residues include Asp521, Glu593, and Asp722.

It belongs to the herpesviridae TRM3 protein family. In terms of assembly, interacts with the terminase subunits TRM1 and TRM2. Interacts with portal protein.

The protein resides in the host nucleus. Its function is as follows. Component of the molecular motor that translocates viral genomic DNA in empty capsid during DNA packaging. Forms a tripartite terminase complex together with TRM1 and TRM2 in the host cytoplasm. Once the complex reaches the host nucleus, it interacts with the capsid portal vertex. This portal forms a ring in which genomic DNA is translocated into the capsid. TRM3 carries an RNase H-like nuclease activity that plays an important role for the cleavage of concatemeric viral DNA into unit length genomes. The sequence is that of Tripartite terminase subunit 3 from Homo sapiens (Human).